Reading from the N-terminus, the 500-residue chain is NAD(P)H-quinone oxidoreductase chain 4, chloroplastic (500 aa).

14 helical membrane-spanning segments follow: residues 4–24 (FPWL…IFFL), 37–57 (ICIC…HFQL), 84–104 (GLSI…TLAA), 111–129 (SRLF…IGSF), 134–154 (LLLF…LLSM), 167–187 (FILY…GMGL), 208–228 (ALEI…SPII), 242–262 (HYST…YGLV), 272–292 (AHSI…IYAA), 305–325 (IAYS…SITD), 330–350 (GAIL…FLAG), 374–396 (IFTM…GFVA), 411–431 (FFMP…LTPI), and 462–482 (LFVS…PDFV).

It belongs to the complex I subunit 4 family.

The protein resides in the plastid. Its subcellular location is the chloroplast thylakoid membrane. It carries out the reaction a plastoquinone + NADH + (n+1) H(+)(in) = a plastoquinol + NAD(+) + n H(+)(out). It catalyses the reaction a plastoquinone + NADPH + (n+1) H(+)(in) = a plastoquinol + NADP(+) + n H(+)(out). This is NAD(P)H-quinone oxidoreductase chain 4, chloroplastic from Chloranthus spicatus (Chulantree).